The primary structure comprises 521 residues: Cytochrome P450 1A1 (521 aa).

Phe-229 provides a ligand contact to substrate. Cys-463 contributes to the heme binding site.

It belongs to the cytochrome P450 family. The cofactor is heme.

The protein resides in the endoplasmic reticulum membrane. Its subcellular location is the microsome membrane. The catalysed reaction is an organic molecule + reduced [NADPH--hemoprotein reductase] + O2 = an alcohol + oxidized [NADPH--hemoprotein reductase] + H2O + H(+). Its function is as follows. Cytochromes P450 are a group of heme-thiolate monooxygenases. They oxidize a variety of structurally unrelated compounds, including steroids, fatty acids, and xenobiotics. The sequence is that of Cytochrome P450 1A1 (cyp1a1) from Oryzias latipes (Japanese rice fish).